Here is a 494-residue protein sequence, read N- to C-terminus: Cysteine--tRNA ligase (494 aa).

Residue Cys29 participates in Zn(2+) binding. Residues 31–41 (LTVSDDAHLGH) carry the 'HIGH' region motif. A disordered region spans residues 187 to 220 (KAGGVSPDDANTHRDDELPPLDGERGQTWASPWG). Residues 196–211 (ANTHRDDELPPLDGER) show a composition bias toward basic and acidic residues. Zn(2+) is bound by residues Cys230, His255, and Glu259. The short motif at 287-291 (KMSSS) is the 'KMSKS' region element.

This sequence belongs to the class-I aminoacyl-tRNA synthetase family. The cofactor is Zn(2+).

The protein resides in the cytoplasm. The catalysed reaction is tRNA(Cys) + L-cysteine + ATP = L-cysteinyl-tRNA(Cys) + AMP + diphosphate. The protein is Cysteine--tRNA ligase of Halobacterium salinarum (strain ATCC 700922 / JCM 11081 / NRC-1) (Halobacterium halobium).